The chain runs to 776 residues: Probable E3 ubiquitin-protein ligase HECTD2 (776 aa).

The disordered stretch occupies residues 1 to 46; the sequence is MSEAVRVPSPATPLVVAAPAPEERKGKESEREKLPPIVSAGAGATA. Positions 7–20 are enriched in low complexity; sequence VPSPATPLVVAAPA. Position 9 is a phosphoserine (Ser-9). Positions 21-34 are enriched in basic and acidic residues; it reads PEERKGKESEREKL. Residues 437–776 form the HECT domain; the sequence is KRADLKKKLK…ISNSEGFGLE (340 aa). Cys-744 (glycyl thioester intermediate) is an active-site residue.

The enzyme catalyses S-ubiquitinyl-[E2 ubiquitin-conjugating enzyme]-L-cysteine + [acceptor protein]-L-lysine = [E2 ubiquitin-conjugating enzyme]-L-cysteine + N(6)-ubiquitinyl-[acceptor protein]-L-lysine.. It functions in the pathway protein modification; protein ubiquitination. Functionally, E3 ubiquitin-protein ligase which accepts ubiquitin from an E2 ubiquitin-conjugating enzyme in the form of a thioester and then directly transfers the ubiquitin to targeted substrates. Its function is as follows. (Microbial infection) Catalyzes ubiquitination of Botulinum neurotoxin A light chain (LC) of C.botulinum neurotoxin type A (BoNT/A). The polypeptide is Probable E3 ubiquitin-protein ligase HECTD2 (Homo sapiens (Human)).